The primary structure comprises 150 residues: uncharacterized protein (150 aa).

This is an uncharacterized protein from Methanocaldococcus jannaschii (strain ATCC 43067 / DSM 2661 / JAL-1 / JCM 10045 / NBRC 100440) (Methanococcus jannaschii).